The sequence spans 580 residues: 2-succinyl-5-enolpyruvyl-6-hydroxy-3-cyclohexene-1-carboxylate synthase (580 aa).

This sequence belongs to the TPP enzyme family. MenD subfamily. In terms of assembly, homodimer. The cofactor is Mg(2+). Requires Mn(2+) as cofactor. Thiamine diphosphate serves as cofactor.

It catalyses the reaction isochorismate + 2-oxoglutarate + H(+) = 5-enolpyruvoyl-6-hydroxy-2-succinyl-cyclohex-3-ene-1-carboxylate + CO2. Its pathway is quinol/quinone metabolism; 1,4-dihydroxy-2-naphthoate biosynthesis; 1,4-dihydroxy-2-naphthoate from chorismate: step 2/7. It participates in quinol/quinone metabolism; menaquinone biosynthesis. Its function is as follows. Catalyzes the thiamine diphosphate-dependent decarboxylation of 2-oxoglutarate and the subsequent addition of the resulting succinic semialdehyde-thiamine pyrophosphate anion to isochorismate to yield 2-succinyl-5-enolpyruvyl-6-hydroxy-3-cyclohexene-1-carboxylate (SEPHCHC). The polypeptide is 2-succinyl-5-enolpyruvyl-6-hydroxy-3-cyclohexene-1-carboxylate synthase (Listeria monocytogenes serovar 1/2a (strain ATCC BAA-679 / EGD-e)).